The primary structure comprises 341 residues: Anthranilate phosphoribosyltransferase (341 aa).

5-phospho-alpha-D-ribose 1-diphosphate contacts are provided by residues glycine 79, 82-83 (GD), threonine 87, 89-92 (NIST), 107-115 (KHGNRAASS), and alanine 119. Glycine 79 is an anthranilate binding site. Position 91 (serine 91) interacts with Mg(2+). Asparagine 110 serves as a coordination point for anthranilate. Residue arginine 165 coordinates anthranilate. The Mg(2+) site is built by aspartate 224 and glutamate 225.

Belongs to the anthranilate phosphoribosyltransferase family. In terms of assembly, homodimer. It depends on Mg(2+) as a cofactor.

It catalyses the reaction N-(5-phospho-beta-D-ribosyl)anthranilate + diphosphate = 5-phospho-alpha-D-ribose 1-diphosphate + anthranilate. Its pathway is amino-acid biosynthesis; L-tryptophan biosynthesis; L-tryptophan from chorismate: step 2/5. In terms of biological role, catalyzes the transfer of the phosphoribosyl group of 5-phosphorylribose-1-pyrophosphate (PRPP) to anthranilate to yield N-(5'-phosphoribosyl)-anthranilate (PRA). In Lacticaseibacillus paracasei (strain ATCC 334 / BCRC 17002 / CCUG 31169 / CIP 107868 / KCTC 3260 / NRRL B-441) (Lactobacillus paracasei), this protein is Anthranilate phosphoribosyltransferase.